A 360-amino-acid chain; its full sequence is Mitogen-activated protein kinase 14 (360 aa).

Residue S2 is modified to N-acetylserine. S2 is modified (phosphoserine). T16 is subject to Phosphothreonine. One can recognise a Protein kinase domain in the interval 24-308 (YQNLSPVGSG…AAQALAHAYF (285 aa)). ATP-binding positions include 30-38 (VGSGAYGSV) and K53. Residues K53 and K152 each carry the N6-acetyllysine modification. The active-site Proton acceptor is the D168. T180 bears the Phosphothreonine; by MAP2K3, MAP2K4, MAP2K6 and autocatalysis mark. The TXY motif lies at 180-182 (TGY). The residue at position 182 (Y182) is a Phosphotyrosine; by MAP2K3, MAP2K4, MAP2K6 and autocatalysis. Phosphothreonine is present on T263. Position 323 is a phosphotyrosine; by ZAP70 (Y323).

The protein belongs to the protein kinase superfamily. CMGC Ser/Thr protein kinase family. MAP kinase subfamily. As to quaternary structure, component of a signaling complex containing at least AKAP13, PKN1, MAPK14, ZAK and MAP2K3. Within this complex, AKAP13 interacts directly with PKN1, which in turn recruits MAPK14, MAP2K3 and ZAK. Binds to a kinase interaction motif within the protein tyrosine phosphatase, PTPRR. This interaction retains MAPK14 in the cytoplasm and prevents nuclear accumulation. Interacts with SPAG9 and GADD45A. Interacts with CDC25B, CDC25C, DUSP1, DUSP10, DUSP16, NP60, SUPT20H and TAB1. Interacts with casein kinase II subunits CSNK2A1 and CSNK2B. Interacts with PPM1D. Interacts with CDK5RAP3; recruits PPM1D to MAPK14 and may regulate its dephosphorylation. Interacts with DUSP2; this interaction does not lead to catalytic activation of DUSP2 and dephosphrylation of MAPK14. Mg(2+) serves as cofactor. Post-translationally, dually phosphorylated on Thr-180 and Tyr-182 by the MAP2Ks MAP2K3/MKK3, MAP2K4/MKK4 and MAP2K6/MKK6 in response to inflammatory citokines, environmental stress or growth factors, which activates the enzyme. Dual phosphorylation can also be mediated by TAB1-mediated autophosphorylation. TCR engagement in T-cells also leads to Tyr-323 phosphorylation by ZAP70. Dephosphorylated and inactivated by DUPS1, DUSP10 and DUSP16. PPM1D also mediates dephosphorylation and inactivation of MAPK14. In terms of processing, acetylated at Lys-53 and Lys-152 by KAT2B and EP300. Acetylation at Lys-53 increases the affinity for ATP and enhances kinase activity. Lys-53 and Lys-152 are deacetylated by HDAC3. Ubiquitinated. Ubiquitination leads to degradation by the proteasome pathway. In terms of tissue distribution, brain, heart, placenta, pancreas and skeletal muscle. Expressed to a lesser extent in lung, liver and kidney.

It is found in the cytoplasm. It localises to the nucleus. The enzyme catalyses L-seryl-[protein] + ATP = O-phospho-L-seryl-[protein] + ADP + H(+). The catalysed reaction is L-threonyl-[protein] + ATP = O-phospho-L-threonyl-[protein] + ADP + H(+). Activated by cell stresses such as DNA damage, heat shock, osmotic shock, anisomycin and sodium arsenite, as well as pro-inflammatory stimuli such as bacterial lipopolysaccharide (LPS) and interleukin-1. Activation occurs through dual phosphorylation of Thr-180 and Tyr-182 by either of two dual specificity kinases, MAP2K3/MKK3 or MAP2K6/MKK6, and potentially also MAP2K4/MKK4, as well as by TAB1-mediated autophosphorylation. MAPK14 phosphorylated on both Thr-180 and Tyr-182 is 10-20-fold more active than MAPK14 phosphorylated only on Thr-180, whereas MAPK14 phosphorylated on Tyr-182 alone is inactive. whereas Thr-180 is necessary for catalysis, Tyr-182 may be required for auto-activation and substrate recognition. Phosphorylated at Tyr-323 by ZAP70 in an alternative activation pathway in response to TCR signaling in T-cells. This alternative pathway is inhibited by GADD45A. Inhibited by dual specificity phosphatases, such as DUSP1, DUSP10, and DUSP16. Specifically inhibited by the binding of pyridinyl-imidazole compounds, which are cytokine-suppressive anti-inflammatory drugs (CSAID). Isoform Mxi2 is 100-fold less sensitive to these agents than the other isoforms and is not inhibited by DUSP1. Isoform Exip is not activated by MAP2K6. SB203580 is an inhibitor of MAPK14. Serine/threonine kinase which acts as an essential component of the MAP kinase signal transduction pathway. MAPK14 is one of the four p38 MAPKs which play an important role in the cascades of cellular responses evoked by extracellular stimuli such as pro-inflammatory cytokines or physical stress leading to direct activation of transcription factors. Accordingly, p38 MAPKs phosphorylate a broad range of proteins and it has been estimated that they may have approximately 200 to 300 substrates each. Some of the targets are downstream kinases which are activated through phosphorylation and further phosphorylate additional targets. RPS6KA5/MSK1 and RPS6KA4/MSK2 can directly phosphorylate and activate transcription factors such as CREB1, ATF1, the NF-kappa-B isoform RELA/NFKB3, STAT1 and STAT3, but can also phosphorylate histone H3 and the nucleosomal protein HMGN1. RPS6KA5/MSK1 and RPS6KA4/MSK2 play important roles in the rapid induction of immediate-early genes in response to stress or mitogenic stimuli, either by inducing chromatin remodeling or by recruiting the transcription machinery. On the other hand, two other kinase targets, MAPKAPK2/MK2 and MAPKAPK3/MK3, participate in the control of gene expression mostly at the post-transcriptional level, by phosphorylating ZFP36 (tristetraprolin) and ELAVL1, and by regulating EEF2K, which is important for the elongation of mRNA during translation. MKNK1/MNK1 and MKNK2/MNK2, two other kinases activated by p38 MAPKs, regulate protein synthesis by phosphorylating the initiation factor EIF4E2. MAPK14 also interacts with casein kinase II, leading to its activation through autophosphorylation and further phosphorylation of TP53/p53. In the cytoplasm, the p38 MAPK pathway is an important regulator of protein turnover. For example, CFLAR is an inhibitor of TNF-induced apoptosis whose proteasome-mediated degradation is regulated by p38 MAPK phosphorylation. In a similar way, MAPK14 phosphorylates the ubiquitin ligase SIAH2, regulating its activity towards EGLN3. MAPK14 may also inhibit the lysosomal degradation pathway of autophagy by interfering with the intracellular trafficking of the transmembrane protein ATG9. Another function of MAPK14 is to regulate the endocytosis of membrane receptors by different mechanisms that impinge on the small GTPase RAB5A. In addition, clathrin-mediated EGFR internalization induced by inflammatory cytokines and UV irradiation depends on MAPK14-mediated phosphorylation of EGFR itself as well as of RAB5A effectors. Ectodomain shedding of transmembrane proteins is regulated by p38 MAPKs as well. In response to inflammatory stimuli, p38 MAPKs phosphorylate the membrane-associated metalloprotease ADAM17. Such phosphorylation is required for ADAM17-mediated ectodomain shedding of TGF-alpha family ligands, which results in the activation of EGFR signaling and cell proliferation. Another p38 MAPK substrate is FGFR1. FGFR1 can be translocated from the extracellular space into the cytosol and nucleus of target cells, and regulates processes such as rRNA synthesis and cell growth. FGFR1 translocation requires p38 MAPK activation. In the nucleus, many transcription factors are phosphorylated and activated by p38 MAPKs in response to different stimuli. Classical examples include ATF1, ATF2, ATF6, ELK1, PTPRH, DDIT3, TP53/p53 and MEF2C and MEF2A. The p38 MAPKs are emerging as important modulators of gene expression by regulating chromatin modifiers and remodelers. The promoters of several genes involved in the inflammatory response, such as IL6, IL8 and IL12B, display a p38 MAPK-dependent enrichment of histone H3 phosphorylation on 'Ser-10' (H3S10ph) in LPS-stimulated myeloid cells. This phosphorylation enhances the accessibility of the cryptic NF-kappa-B-binding sites marking promoters for increased NF-kappa-B recruitment. Phosphorylates CDC25B and CDC25C which is required for binding to 14-3-3 proteins and leads to initiation of a G2 delay after ultraviolet radiation. Phosphorylates TIAR following DNA damage, releasing TIAR from GADD45A mRNA and preventing mRNA degradation. The p38 MAPKs may also have kinase-independent roles, which are thought to be due to the binding to targets in the absence of phosphorylation. Protein O-Glc-N-acylation catalyzed by the OGT is regulated by MAPK14, and, although OGT does not seem to be phosphorylated by MAPK14, their interaction increases upon MAPK14 activation induced by glucose deprivation. This interaction may regulate OGT activity by recruiting it to specific targets such as neurofilament H, stimulating its O-Glc-N-acylation. Required in mid-fetal development for the growth of embryo-derived blood vessels in the labyrinth layer of the placenta. Also plays an essential role in developmental and stress-induced erythropoiesis, through regulation of EPO gene expression. Isoform MXI2 activation is stimulated by mitogens and oxidative stress and only poorly phosphorylates ELK1 and ATF2. Isoform EXIP may play a role in the early onset of apoptosis. Phosphorylates S100A9 at 'Thr-113'. Phosphorylates NLRP1 downstream of MAP3K20/ZAK in response to UV-B irradiation and ribosome collisions, promoting activation of the NLRP1 inflammasome and pyroptosis. In terms of biological role, (Microbial infection) Activated by phosphorylation by M.tuberculosis EsxA in T-cells leading to inhibition of IFN-gamma production; phosphorylation is apparent within 15 minutes and is inhibited by kinase-specific inhibitors SB203580 and siRNA. The polypeptide is Mitogen-activated protein kinase 14 (Homo sapiens (Human)).